The sequence spans 442 residues: Tol-Pal system protein TolB (442 aa).

The signal sequence occupies residues 1 to 26 (MRHRSCFSLFAGLALVFCLAVGTAAA).

The protein belongs to the TolB family. In terms of assembly, the Tol-Pal system is composed of five core proteins: the inner membrane proteins TolA, TolQ and TolR, the periplasmic protein TolB and the outer membrane protein Pal. They form a network linking the inner and outer membranes and the peptidoglycan layer.

It is found in the periplasm. Functionally, part of the Tol-Pal system, which plays a role in outer membrane invagination during cell division and is important for maintaining outer membrane integrity. The chain is Tol-Pal system protein TolB from Nitratidesulfovibrio vulgaris (strain ATCC 29579 / DSM 644 / CCUG 34227 / NCIMB 8303 / VKM B-1760 / Hildenborough) (Desulfovibrio vulgaris).